The primary structure comprises 233 residues: tRNA (guanine-N(7)-)-methyltransferase (233 aa).

The segment at 1–21 (MTEESHPLRGAGNFFGRRHGK) is disordered. Residues Glu64, Glu89, Asp116, and Asp138 each coordinate S-adenosyl-L-methionine. Residue Asp138 is part of the active site. Substrate contacts are provided by residues Lys142, Asp174, and 212–215 (TRYE).

The protein belongs to the class I-like SAM-binding methyltransferase superfamily. TrmB family.

It carries out the reaction guanosine(46) in tRNA + S-adenosyl-L-methionine = N(7)-methylguanosine(46) in tRNA + S-adenosyl-L-homocysteine. The protein operates within tRNA modification; N(7)-methylguanine-tRNA biosynthesis. Functionally, catalyzes the formation of N(7)-methylguanine at position 46 (m7G46) in tRNA. The chain is tRNA (guanine-N(7)-)-methyltransferase from Brucella anthropi (strain ATCC 49188 / DSM 6882 / CCUG 24695 / JCM 21032 / LMG 3331 / NBRC 15819 / NCTC 12168 / Alc 37) (Ochrobactrum anthropi).